The chain runs to 240 residues: Tetrahydromethanopterin S-methyltransferase subunit A (240 aa).

Over 1 to 218 (MAEKREPAAG…KFHAGVHAGK (218 aa)) the chain is Cytoplasmic. Residue histidine 85 participates in 5-hydroxybenzimidazolylcob(I)amide binding. Residues 219 to 239 (FEGIMIGLAITLSLLGLILFG) form a helical membrane-spanning segment. Position 240 (arginine 240) is a topological domain, extracellular.

Belongs to the MtrA family. The complex is composed of 8 subunits; MtrA, MtrB, MtrC, MtrD, MtrE, MtrF, MtrG and MtrH. It depends on 5-hydroxybenzimidazolylcob(I)amide as a cofactor.

It localises to the cell membrane. The enzyme catalyses 5-methyl-5,6,7,8-tetrahydromethanopterin + coenzyme M + 2 Na(+)(in) = 5,6,7,8-tetrahydromethanopterin + methyl-coenzyme M + 2 Na(+)(out). Its pathway is one-carbon metabolism; methanogenesis from CO(2); methyl-coenzyme M from 5,10-methylene-5,6,7,8-tetrahydromethanopterin: step 2/2. In terms of biological role, part of a complex that catalyzes the formation of methyl-coenzyme M and tetrahydromethanopterin from coenzyme M and methyl-tetrahydromethanopterin. This is an energy-conserving, sodium-ion translocating step. This chain is Tetrahydromethanopterin S-methyltransferase subunit A, found in Methanohalophilus mahii (strain ATCC 35705 / DSM 5219 / SLP).